The primary structure comprises 801 residues: MPYNHREIEPKWQARWEQDNAFVTTEDPEKEGFYALDMFPYPSGAGLHVGHPEGYTATDILARMKRMQGYNVLHPMGWDAFGLPAEQYALDTGNDPREFTAQNIETFKRQLKDLGFSYDWDREINTTDPKYYKWTQWIFTKLYEQGLAFVDEVAVNWCPALGTVLANEEVIDGLSERGNHPVVRVPMRQWVLKITEYADRLLEDLDELDWPESVKEMQRNWIGKSEGAEIDFTIDGHKKQVTVFTTRPDTVFGATYLVLAPEHPFVTDITTEDHEEAVKAYIASVQTKSDLERTDLAKEKTGVFTGAFAVNPISGERLPIWIADYVLATYGTGAIMAVPAHDERDHEFAKQFDLPIIEVVKGGNVDEVAYTGEGEHVNSQMLDGLSKQEAIETIIAELETNQVGRKKITFRLRDWLFSRQRYWGEPIPVVHMEDGTMKTLDKSELPLELPMIPEIKPSGTGESPLALAEDWLDYTDPVTGLKGRRETNTMPQWGGSCWYYLRFIDPHNEEAIADPEKLKYWLPVDIYIGGAEHAVLHLLYARFWHKVLYDIGVVPTKEPFQKLYNQGMILGENNEKMSKSRGNVINPDEIVKSHGADTLRLYEMFMGPLDASVSWSENGLDGARRFLDRVWRLFERTADIQDVTTVDADFERVYHQTVKKVTEDFTNIQFNTGISQLMVFVNEANKQPVLPRHFLRGFIQLLTPVAPHLGEELWEQLGFEDTLTYAAWPTFDETKLVSDTMEFVIQVNGKVRSKLVISMEATKEEIEALAFADEKTQEWIGDKTVRKVIVVPKKLINIVAN.

The 'HIGH' region signature appears at 40–51 (PYPSGAGLHVGH). The 'KMSKS' region motif lies at 576–580 (KMSKS). Lys579 is a binding site for ATP.

The protein belongs to the class-I aminoacyl-tRNA synthetase family.

It localises to the cytoplasm. The enzyme catalyses tRNA(Leu) + L-leucine + ATP = L-leucyl-tRNA(Leu) + AMP + diphosphate. The protein is Leucine--tRNA ligase of Exiguobacterium sibiricum (strain DSM 17290 / CCUG 55495 / CIP 109462 / JCM 13490 / 255-15).